The following is a 660-amino-acid chain: DNA mismatch repair protein MutL (660 aa).

Belongs to the DNA mismatch repair MutL/HexB family.

Functionally, this protein is involved in the repair of mismatches in DNA. It is required for dam-dependent methyl-directed DNA mismatch repair. May act as a 'molecular matchmaker', a protein that promotes the formation of a stable complex between two or more DNA-binding proteins in an ATP-dependent manner without itself being part of a final effector complex. In Streptococcus pyogenes serotype M12 (strain MGAS2096), this protein is DNA mismatch repair protein MutL.